A 625-amino-acid chain; its full sequence is Mitochondrial Rho GTPase 1 (625 aa).

The Cytoplasmic segment spans residues Met-1 to Ser-601. The Miro 1 domain maps to Asp-3 to Val-170. GTP contacts are provided by residues Gly-16 to Thr-23, Asp-62 to Lys-66, and Asn-123 to Asp-126. 2 consecutive EF-hand domains span residues Arg-188 to Ile-223 and Glu-308 to Pro-343. 10 residues coordinate Ca(2+): Asp-201, Asp-203, Asp-205, Tyr-207, Glu-212, Asp-321, Asp-323, Asp-325, Cys-327, and Glu-332. Residues His-420–Leu-625 enclose the Miro 2 domain. GTP contacts are provided by residues Gly-433–Thr-440, Arg-470–Glu-474, and Thr-537–Glu-540. The helical; Anchor for type IV membrane protein transmembrane segment at Asn-602 to Leu-622 threads the bilayer. Over Lys-623–Leu-625 the chain is Mitochondrial intermembrane.

Belongs to the mitochondrial Rho GTPase family.

The protein localises to the mitochondrion outer membrane. In terms of biological role, mitochondrial GTPase involved in mitochondrial trafficking. Probably involved in control of anterograde transport of mitochondria and their subcellular distribution. Plays a role in maintaining mitochondrial morphology. This chain is Mitochondrial Rho GTPase 1, found in Caenorhabditis elegans.